A 75-amino-acid chain; its full sequence is Large ribosomal subunit protein bL31 (75 aa).

Residues cysteine 16, cysteine 18, cysteine 37, and cysteine 40 each coordinate Zn(2+).

This sequence belongs to the bacterial ribosomal protein bL31 family. Type A subfamily. In terms of assembly, part of the 50S ribosomal subunit. Zn(2+) is required as a cofactor.

Its function is as follows. Binds the 23S rRNA. This chain is Large ribosomal subunit protein bL31, found in Nitrosospira multiformis (strain ATCC 25196 / NCIMB 11849 / C 71).